The following is a 249-amino-acid chain: tRNA (guanine-N(1)-)-methyltransferase (249 aa).

Residues G113 and 133-138 (IGDFVL) contribute to the S-adenosyl-L-methionine site.

This sequence belongs to the RNA methyltransferase TrmD family. As to quaternary structure, homodimer.

It is found in the cytoplasm. It carries out the reaction guanosine(37) in tRNA + S-adenosyl-L-methionine = N(1)-methylguanosine(37) in tRNA + S-adenosyl-L-homocysteine + H(+). Its function is as follows. Specifically methylates guanosine-37 in various tRNAs. This is tRNA (guanine-N(1)-)-methyltransferase from Aliivibrio fischeri (strain ATCC 700601 / ES114) (Vibrio fischeri).